A 402-amino-acid chain; its full sequence is MSNEELTERWQGTLMNNYGTPRLPLVRGEGARLWDADGKEYLDFVGGIAVNALGHAHPAVVDAVSRQIASLGHVSNLFIAEPPVALAERLLQHFGRDGKVYFCNSGAEANEGAFKIGRLTGRPHMVATRGGFHGRTMGALALTGQPGKQEPFLPLPGDVTHVPYGDPQALAAAVTEETALVIIEPIQGENGVVVPPPGYLKAARAITAATGALLVLDEVQTGVGRTGHWFEYQAHEGVLPDVVTLAKGLGGGLPLGATVAFGRAADLLQPGHHGTTFGGNPVACAAGLAVLDTIADEGLLDNVKRQSETLRGGVEALGHPLVAHVRGAGLLLGIVLTEPLAAQVQQAAQDAGILVNAPAPDVVRLMPALNLGDDVVEAFLGALPGILDQAAETAHGDGRSGE.

Pyridoxal 5'-phosphate-binding positions include 106–107 (GA) and F132. R135 lines the N(2)-acetyl-L-ornithine pocket. Residue 217–220 (DEVQ) participates in pyridoxal 5'-phosphate binding. An N6-(pyridoxal phosphate)lysine modification is found at K247. T275 lines the N(2)-acetyl-L-ornithine pocket. Residue T276 participates in pyridoxal 5'-phosphate binding.

This sequence belongs to the class-III pyridoxal-phosphate-dependent aminotransferase family. ArgD subfamily. As to quaternary structure, homodimer. Pyridoxal 5'-phosphate serves as cofactor.

The protein localises to the cytoplasm. The enzyme catalyses N(2)-acetyl-L-ornithine + 2-oxoglutarate = N-acetyl-L-glutamate 5-semialdehyde + L-glutamate. Its pathway is amino-acid biosynthesis; L-arginine biosynthesis; N(2)-acetyl-L-ornithine from L-glutamate: step 4/4. The polypeptide is Acetylornithine aminotransferase (Streptomyces coelicolor (strain ATCC BAA-471 / A3(2) / M145)).